Consider the following 1034-residue polypeptide: Enteropeptidase (1034 aa).

A propeptide spanning residues 1-51 (MGSKRIIPSRHRSLSTYEVMFTALFAILMVLCAGLIAVSWLTIKGSEKDAA) is cleaved from the precursor. Over 2–18 (GSKRIIPSRHRSLSTYE) the chain is Cytoplasmic. A helical; Signal-anchor for type II membrane protein membrane pass occupies residues 19–47 (VMFTALFAILMVLCAGLIAVSWLTIKGSE). At 48-1034 (KDAALGKSHE…FTEWIQSFLH (987 aa)) the chain is on the extracellular side. Positions 54–169 (KSHEARGTMK…NSIDITESLE (116 aa)) constitute an SEA domain. N-linked (GlcNAc...) asparagine glycosylation is found at Asn116, Asn147, Asn170, and Asn194. The LDL-receptor class A 1 domain occupies 197 to 238 (IECLPGSRPCADALKCIAVDLFCDGELNCPDGSDEDSKICAT). 4 disulfides stabilise this stretch: Cys199–Cys212, Cys206–Cys225, Cys219–Cys236, and Cys240–Cys268. The region spanning 240 to 349 (CDGKFLLTES…IGFNATYTAF (110 aa)) is the CUB 1 domain. Asn283, Asn343, Asn350, Asn403, Asn455, Asn485, Asn518, Asn549, and Asn645 each carry an N-linked (GlcNAc...) asparagine glycan. In terms of domain architecture, MAM spans 357-519 (DEKINCNFED…ISLTYGICNV (163 aa)). A disulfide bridge connects residues Cys539 and Cys567. In terms of domain architecture, CUB 2 spans 539-649 (CGGPFELWEP…GGFKANFTTG (111 aa)). One can recognise an LDL-receptor class A 2 domain in the interval 656–694 (EPCKEDNFQCENGECVLLVNLCDGFSHCKDGSDEAHCVR). 3 cysteine pairs are disulfide-bonded: Cys658/Cys670, Cys665/Cys683, and Cys677/Cys692. The 94-residue stretch at 693–786 (VRFLNGTANN…LILLQCNHKS (94 aa)) folds into the SRCR domain. 5 N-linked (GlcNAc...) asparagine glycosylation sites follow: Asn697, Asn701, Asn721, Asn740, and Asn761. 6 cysteine pairs are disulfide-bonded: Cys772–Cys782, Cys787–Cys911, Cys825–Cys841, Cys925–Cys992, Cys956–Cys971, and Cys982–Cys1010. One can recognise a Peptidase S1 domain in the interval 800–1034 (IVGGNDSREG…FTEWIQSFLH (235 aa)). N-linked (GlcNAc...) asparagine glycosylation occurs at Asn804. His840 (charge relay system) is an active-site residue. Asn863 carries N-linked (GlcNAc...) asparagine glycosylation. Residue Asp891 is the Charge relay system of the active site. Residues Asn902 and Asn964 are each glycosylated (N-linked (GlcNAc...) asparagine). Catalysis depends on Ser986, which acts as the Charge relay system.

It belongs to the peptidase S1 family. In terms of assembly, heterotrimer of a catalytic (light) chain, a multidomain (heavy) chain, and a mini chain. Post-translationally, the chains are derived from a single precursor that is cleaved by a trypsin-like protease. In terms of processing, the mini chain may be cleaved by elastase.

It is found in the membrane. It carries out the reaction Activation of trypsinogen by selective cleavage of 6-Lys-|-Ile-7 bond.. Its function is as follows. Responsible for initiating activation of pancreatic proteolytic proenzymes (trypsin, chymotrypsin and carboxypeptidase A). It catalyzes the conversion of trypsinogen to trypsin which in turn activates other proenzymes including chymotrypsinogen, procarboxypeptidases, and proelastases. In Sus scrofa (Pig), this protein is Enteropeptidase (TMPRSS15).